A 790-amino-acid chain; its full sequence is Type VI secretion system spike protein VgrG5 (790 aa).

Basic and acidic residues-rich tracts occupy residues 753-763 (GFRDYRAEMPQ) and 772-790 (AYRR…EPTP). A disordered region spans residues 753–790 (GFRDYRAEMPQHKPRSAPDAYRRDASRPGAADKDEPTP).

This sequence belongs to the VgrG protein family.

The protein resides in the secreted. Part of the H2 type VI secretion system (H2-T6SS) specialized secretion system, which delivers several virulence factors in both prokaryotic and eukaryotic cells during infection. Allows the delivery of the phospholipase effector PldB to target cells where it exerts its toxicity. Also plays a role in VgrG4b and its effector PldA secretion. The protein is Type VI secretion system spike protein VgrG5 of Pseudomonas aeruginosa (strain ATCC 15692 / DSM 22644 / CIP 104116 / JCM 14847 / LMG 12228 / 1C / PRS 101 / PAO1).